Reading from the N-terminus, the 157-residue chain is MVVRLPYVKGSILCSALAKGCGHNYYGEPAWPNDILYIFPVVILGTISFSLGLGVIENQAIGEPANPFATPLEILPEWYFFPTFNLLRILPDKLVGVLSLASVPVILVLTAFIENINRYQNPFRRPVASLVYLTSTCYALWLGYGSVLGISEALPFV.

3 helical membrane passes run 35-55 (ILYI…GLGV), 94-114 (LVGV…AFIE), and 130-150 (LVYL…VLGI).

It belongs to the cytochrome b family. PetD subfamily. The 4 large subunits of the cytochrome b6-f complex are cytochrome b6, subunit IV (17 kDa polypeptide, petD), cytochrome f and the Rieske protein, while the 4 small subunits are petG, petL, petM and petN. The complex functions as a dimer.

The protein localises to the plastid. The protein resides in the chloroplast thylakoid membrane. In terms of biological role, component of the cytochrome b6-f complex, which mediates electron transfer between photosystem II (PSII) and photosystem I (PSI), cyclic electron flow around PSI, and state transitions. The chain is Cytochrome b6-f complex subunit 4 from Amphidinium carterae (Dinoflagellate).